A 194-amino-acid chain; its full sequence is HTH-type transcriptional regulator BetI (194 aa).

The HTH tetR-type domain occupies 8-68 (EIRRAQLIDA…ATMRHVLRDL (61 aa)). Positions 31–50 (TLASVAQRANISTGIVSHYF) form a DNA-binding region, H-T-H motif.

Its pathway is amine and polyamine biosynthesis; betaine biosynthesis via choline pathway [regulation]. Functionally, repressor involved in the biosynthesis of the osmoprotectant glycine betaine. It represses transcription of the choline transporter BetT and the genes of BetAB involved in the synthesis of glycine betaine. The chain is HTH-type transcriptional regulator BetI from Burkholderia lata (strain ATCC 17760 / DSM 23089 / LMG 22485 / NCIMB 9086 / R18194 / 383).